Consider the following 318-residue polypeptide: Glutathione synthetase (318 aa).

One can recognise an ATP-grasp domain in the interval 133 to 317; the sequence is KMYALQFTSV…LGQQVMAWLF (185 aa). Residue 159–215 participates in ATP binding; the sequence is VQQQGMAVLKPLGGKGGEGILFLQAGDRNLNSMIEISTQRGQLPVMLQEYLPAAKEG. Positions 288 and 290 each coordinate Mg(2+).

This sequence belongs to the prokaryotic GSH synthase family. The cofactor is Mg(2+). Mn(2+) is required as a cofactor.

The catalysed reaction is gamma-L-glutamyl-L-cysteine + glycine + ATP = glutathione + ADP + phosphate + H(+). The protein operates within sulfur metabolism; glutathione biosynthesis; glutathione from L-cysteine and L-glutamate: step 2/2. This Thermosynechococcus vestitus (strain NIES-2133 / IAM M-273 / BP-1) protein is Glutathione synthetase.